A 366-amino-acid chain; its full sequence is MATSSAHLSFLAGRISPFSSERIGLFPLRGEFRPRMTRFRCSAGPSGFFTRLGRLIKEKAKSDVEKVFSGFSKTRENLAVIDELLLFWNLAETDRVLDELEEALLVSDFGPKITVRIVERLREDIMSGKLKSGSEIKDALKESVLEMLAKKNSKTELQLGFRKPAVIMIVGVNGGGKTTSLGKLAHRLKNEGTKVLMAAGDTFRAAASDQLEIWAERTGCEIVVAEGDKAKAATVLSKAVKRGKEEGYDVVLCDTSGRLHTNYSLMEELIACKKAVGKIVSGAPNEILLVLDGNTGLNMLPQAREFNEVVGITGLILTKLDGSARGGCVVSVVEELGIPVKFIGVGEAVEDLQPFDPEAFVNAIFS.

Residues 1–40 (MATSSAHLSFLAGRISPFSSERIGLFPLRGEFRPRMTRFR) constitute a chloroplast transit peptide. Residues 171 to 178 (GVNGGGKT), 254 to 258 (DTSGR), and 318 to 321 (TKLD) each bind GTP.

This sequence belongs to the GTP-binding SRP family. As to quaternary structure, monomer. Interacts with FFC/cpSRP54, a component of the cpSRP complex, composed of a FFC/cpSRP54 monomer and a CAO/cpSRP43 dimer. The complex with FFC/cpSRP54 is formed when both proteins are bound with GTP. As to expression, expressed in green tissues. Low levels in roots and seeds.

Its subcellular location is the plastid. It is found in the chloroplast stroma. It localises to the chloroplast thylakoid membrane. Functionally, signal recognition particle receptor protein. Binds GTP specifically. The GTPase activity is inhibited by the N-terminus of the protein until binding to the thylakoid membrane. Activates the GTPase activity of FFC/cpSRP54 when bound to the cpSRP complex. Required for light-harvesting chlorophyll a/b-binding protein (LHCP) integration into thylakoids. Might be also functionally linked to the Sec translocation machinery. The sequence is that of Cell division protein FtsY homolog, chloroplastic (CPFTSY) from Arabidopsis thaliana (Mouse-ear cress).